Here is a 98-residue protein sequence, read N- to C-terminus: DNA/RNA-binding protein Alba (98 aa).

The residue at position 16 (K16) is an N6-acetyllysine.

Belongs to the histone-like Alba family. Acetylated. Acetylation at Lys-16 decreases DNA-binding affinity.

The protein resides in the cytoplasm. It localises to the chromosome. Binds double-stranded DNA tightly but without sequence specificity. Involved in DNA compaction. The chain is DNA/RNA-binding protein Alba from Metallosphaera sedula (strain ATCC 51363 / DSM 5348 / JCM 9185 / NBRC 15509 / TH2).